The primary structure comprises 845 residues: Putative DEAD-box ATP-dependent RNA helicase 29 (845 aa).

Residues 28–56 carry the Q motif motif; the sequence is GGFESLNLGPNVFNAIKKKGYKVPTPIQR. Positions 59–232 constitute a Helicase ATP-binding domain; the sequence is MPLILSGVDV…KAGLREPQLV (174 aa). 72–79 is a binding site for ATP; the sequence is ARTGSGKT. The DEAD box motif lies at 180 to 183; the sequence is DEAD. Positions 256–411 constitute a Helicase C-terminal domain; sequence KYSALLYLVR…EVLKNMEEVM (156 aa). The disordered stretch occupies residues 675-845; that stretch reads SGKIKTESGA…GGGGKRGRGR (171 aa). Composition is skewed to basic and acidic residues over residues 696 to 716 and 738 to 754; these read RWQERSHKKVSRDSGDADETT and VRSEIKDLDQVRKERQQ. Gly residues predominate over residues 770-799; it reads GGRGGARGGRGGGARGGRGGSRDFGGGGRD. Residues 806–817 show a composition bias toward basic and acidic residues; that stretch reads RGGRSGGRDFGG. Basic residues predominate over residues 828–845; it reads GGKRGGGRGGGGKRGRGR.

This sequence belongs to the DEAD box helicase family. DDX54/DBP10 subfamily.

The catalysed reaction is ATP + H2O = ADP + phosphate + H(+). This chain is Putative DEAD-box ATP-dependent RNA helicase 29 (RH29), found in Arabidopsis thaliana (Mouse-ear cress).